Here is a 360-residue protein sequence, read N- to C-terminus: MESSNCKVITPLLSQRHRRMVTKDGHSTLQTDGAPRGLVYLRDAWGTLIDMRWRWVMLVFSASFVLHWLVFAVLWYVLAEMNGDLELDHDAPPENHTICVKYITSFTAAFSFSLETQLTIGYGTMFPSGDCPSAIALLAIQMLLGLMLEAFITGAFVAKIARPKNRAFSIRFTDLAVVAHRDGKPNLIFQVANIRHSPLTSVRVSAVLYQERENGQLHQTSVDFHLDGISSEECPFFIFPLTYYHSITPSSPLVTLLQHENPPHFELVVFLSAMQEGTGEICQRRTSYLPSEIMLHHCFASLLTRGSKGEYKVKMENFDKTVPELPTPLVSKSPHRTDLDIRINGQSIDNFQISETGLTE.

Residues 1 to 50 (MESSNCKVITPLLSQRHRRMVTKDGHSTLQTDGAPRGLVYLRDAWGTLID) lie on the Cytoplasmic side of the membrane. The chain crosses the membrane as a helical span at residues 51–77 (MRWRWVMLVFSASFVLHWLVFAVLWYV). Topologically, residues 78–105 (LAEMNGDLELDHDAPPENHTICVKYITS) are extracellular. The helical; Pore-forming intramembrane region spans 106–122 (FTAAFSFSLETQLTIGY). A Selectivity filter motif is present at residues 119–124 (TIGYGT). Over 123–131 (GTMFPSGDC) the chain is Extracellular. A helical transmembrane segment spans residues 132–157 (PSAIALLAIQMLLGLMLEAFITGAFV). Residues 158–360 (AKIARPKNRA…FQISETGLTE (203 aa)) lie on the Cytoplasmic side of the membrane. At Ser201 the chain carries Phosphoserine; by PKC. Ser287 bears the Phosphoserine; by PKA mark.

This sequence belongs to the inward rectifier-type potassium channel (TC 1.A.2.1) family. KCNJ13 subfamily. As to quaternary structure, homotetramer. Phosphorylation at Ser-201 by PKC strongly inhibits ionic currents, while phosphorylation at Ser-287 by PKA increases them.

The protein resides in the membrane. It localises to the cell membrane. It catalyses the reaction K(+)(in) = K(+)(out). With respect to regulation, inhibited by Ba(2+) and Cs(+), although sensitivity to those inhibitors is much lower than in other Kir channels. In terms of biological role, inward rectifier potassium channels are characterized by a greater tendency to allow potassium to flow into the cell rather than out of it. Their voltage dependence is regulated by the concentration of extracellular potassium; as external potassium is raised, the voltage range of the channel opening shifts to more positive voltages. The inward rectification is mainly due to the blockage of outward current by internal magnesium. KCNJ13 has a very low single channel conductance, low sensitivity to block by external barium and cesium, and no dependence of its inward rectification properties on the internal blocking particle magnesium. The chain is Inward rectifier potassium channel 13 (KCNJ13) from Cavia porcellus (Guinea pig).